The primary structure comprises 490 residues: Probable glycine dehydrogenase (decarboxylating) subunit 2 (490 aa).

N6-(pyridoxal phosphate)lysine is present on lysine 273.

The protein belongs to the GcvP family. C-terminal subunit subfamily. As to quaternary structure, the glycine cleavage system is composed of four proteins: P, T, L and H. In this organism, the P 'protein' is a heterodimer of two subunits. Requires pyridoxal 5'-phosphate as cofactor.

The catalysed reaction is N(6)-[(R)-lipoyl]-L-lysyl-[glycine-cleavage complex H protein] + glycine + H(+) = N(6)-[(R)-S(8)-aminomethyldihydrolipoyl]-L-lysyl-[glycine-cleavage complex H protein] + CO2. Functionally, the glycine cleavage system catalyzes the degradation of glycine. The P protein binds the alpha-amino group of glycine through its pyridoxal phosphate cofactor; CO(2) is released and the remaining methylamine moiety is then transferred to the lipoamide cofactor of the H protein. This chain is Probable glycine dehydrogenase (decarboxylating) subunit 2, found in Staphylococcus aureus (strain MRSA252).